We begin with the raw amino-acid sequence, 154 residues long: MSHYEGDLRPAGARFVIVCSRWNARITDALVAGACHSLVDNGVPDDAVDVVRVPGAWEIPIVANLLAQAGQHAAIIALGCVVRGDTRHYEHVADLCAEGMMSVQMQTGVPVLNGVLAVECIKDAEMRAGGSHGNKGAETALAALEMVSLLEKLP.

Residues W22, 56–58 (AWE), and 80–82 (CVV) each bind 5-amino-6-(D-ribitylamino)uracil. 85–86 (DT) lines the (2S)-2-hydroxy-3-oxobutyl phosphate pocket. H88 serves as the catalytic Proton donor. N113 is a binding site for 5-amino-6-(D-ribitylamino)uracil. Residue R127 participates in (2S)-2-hydroxy-3-oxobutyl phosphate binding.

The protein belongs to the DMRL synthase family. Forms an icosahedral capsid composed of 60 subunits, arranged as a dodecamer of pentamers.

It carries out the reaction (2S)-2-hydroxy-3-oxobutyl phosphate + 5-amino-6-(D-ribitylamino)uracil = 6,7-dimethyl-8-(1-D-ribityl)lumazine + phosphate + 2 H2O + H(+). It participates in cofactor biosynthesis; riboflavin biosynthesis; riboflavin from 2-hydroxy-3-oxobutyl phosphate and 5-amino-6-(D-ribitylamino)uracil: step 1/2. Its function is as follows. Catalyzes the formation of 6,7-dimethyl-8-ribityllumazine by condensation of 5-amino-6-(D-ribitylamino)uracil with 3,4-dihydroxy-2-butanone 4-phosphate. This is the penultimate step in the biosynthesis of riboflavin. The protein is 6,7-dimethyl-8-ribityllumazine synthase of Xylella fastidiosa (strain M23).